The primary structure comprises 457 residues: Ribosomal protein uS12 methylthiotransferase RimO (457 aa).

Residues P6–P116 form the MTTase N-terminal domain. Residues C15, C51, C80, C147, C151, and C154 each coordinate [4Fe-4S] cluster. One can recognise a Radical SAM core domain in the interval L133–A370. Positions E373–P441 constitute a TRAM domain.

This sequence belongs to the methylthiotransferase family. RimO subfamily. [4Fe-4S] cluster serves as cofactor.

The protein resides in the cytoplasm. It catalyses the reaction L-aspartate(89)-[ribosomal protein uS12]-hydrogen + (sulfur carrier)-SH + AH2 + 2 S-adenosyl-L-methionine = 3-methylsulfanyl-L-aspartate(89)-[ribosomal protein uS12]-hydrogen + (sulfur carrier)-H + 5'-deoxyadenosine + L-methionine + A + S-adenosyl-L-homocysteine + 2 H(+). Functionally, catalyzes the methylthiolation of an aspartic acid residue of ribosomal protein uS12. This chain is Ribosomal protein uS12 methylthiotransferase RimO, found in Xanthomonas campestris pv. campestris (strain 8004).